The sequence spans 324 residues: Bis(5'-nucleosyl)-tetraphosphatase, symmetrical (324 aa).

A disordered region spans residues 269–324 (PGREVTAPATAPRAPRRPRERQGRQRARGGRGGGNGNGNGGNAAAPAAAPGDAPQE). The span at 282–297 (APRRPRERQGRQRARG) shows a compositional bias: basic residues. Residues 298-309 (GRGGGNGNGNGG) show a composition bias toward gly residues. The segment covering 310-324 (NAAAPAAAPGDAPQE) has biased composition (low complexity).

It belongs to the Ap4A hydrolase family.

The enzyme catalyses P(1),P(4)-bis(5'-adenosyl) tetraphosphate + H2O = 2 ADP + 2 H(+). In terms of biological role, hydrolyzes diadenosine 5',5'''-P1,P4-tetraphosphate to yield ADP. This is Bis(5'-nucleosyl)-tetraphosphatase, symmetrical from Xanthomonas campestris pv. campestris (strain ATCC 33913 / DSM 3586 / NCPPB 528 / LMG 568 / P 25).